We begin with the raw amino-acid sequence, 95 residues long: Putative ESAT-6-like protein X (95 aa).

The segment at 72-95 (HGQKVQRASSSMADTDRSVSSAWS) is disordered.

This sequence belongs to the WXG100 family.

The sequence is that of Putative ESAT-6-like protein X from Mycobacterium leprae (strain TN).